Consider the following 305-residue polypeptide: Translation initiation factor eIF2B subunit alpha (305 aa).

The protein belongs to the eIF-2B alpha/beta/delta subunits family. In terms of assembly, component of the translation initiation factor 2B (eIF2B) complex which is a heterodecamer of two sets of five different subunits: alpha, beta, gamma, delta and epsilon. Subunits alpha, beta and delta comprise a regulatory subcomplex and subunits epsilon and gamma comprise a catalytic subcomplex. Within the complex, the hexameric regulatory complex resides at the center, with the two heterodimeric catalytic subcomplexes bound on opposite sides.

Its subcellular location is the cytoplasm. The protein localises to the cytosol. With respect to regulation, activated by the chemical integrated stress response (ISR) inhibitor ISRIB which stimulates guanine nucleotide exchange factor activity for both phosphorylated and unphosphorylated eIF2. Its function is as follows. Acts as a component of the translation initiation factor 2B (eIF2B) complex, which catalyzes the exchange of GDP for GTP on eukaryotic initiation factor 2 (eIF2) gamma subunit. Its guanine nucleotide exchange factor activity is repressed when bound to eIF2 complex phosphorylated on the alpha subunit, thereby limiting the amount of methionyl-initiator methionine tRNA available to the ribosome and consequently global translation is repressed. The protein is Translation initiation factor eIF2B subunit alpha (EIF2B1) of Bos taurus (Bovine).